Consider the following 273-residue polypeptide: Large ribosomal subunit protein uL2 (273 aa).

Disordered stretches follow at residues 32–53 (PLVEKNSKSGGRNNNGRITTRH) and 221–273 (RGTA…RRSK). Positions 39-48 (KSGGRNNNGR) are enriched in low complexity.

It belongs to the universal ribosomal protein uL2 family. Part of the 50S ribosomal subunit. Forms a bridge to the 30S subunit in the 70S ribosome.

One of the primary rRNA binding proteins. Required for association of the 30S and 50S subunits to form the 70S ribosome, for tRNA binding and peptide bond formation. It has been suggested to have peptidyltransferase activity; this is somewhat controversial. Makes several contacts with the 16S rRNA in the 70S ribosome. The chain is Large ribosomal subunit protein uL2 from Erwinia tasmaniensis (strain DSM 17950 / CFBP 7177 / CIP 109463 / NCPPB 4357 / Et1/99).